Here is a 750-residue protein sequence, read N- to C-terminus: uncharacterized protein (750 aa).

18 N-linked (GlcNAc...) asparagine glycosylation sites follow: Asn-61, Asn-84, Asn-115, Asn-154, Asn-176, Asn-197, Asn-207, Asn-228, Asn-241, Asn-267, Asn-293, Asn-299, Asn-312, Asn-335, Asn-351, Asn-373, Asn-389, and Asn-519. A phosphoserine mark is found at Ser-675 and Ser-678. A Glycyl lysine isopeptide (Lys-Gly) (interchain with G-Cter in ubiquitin) cross-link involves residue Lys-697. 2 stretches are compositionally biased toward polar residues: residues 703 to 726 and 736 to 750; these read EITA…SNRT and KDSN…HLVA. A disordered region spans residues 703–750; the sequence is EITAIDNSSSANNTDVTGSTSNRTELSHPDVTPKDSNGPVNNNAHLVA. N-linked (GlcNAc...) asparagine glycans are attached at residues Asn-709, Asn-714, and Asn-724.

In terms of processing, N-glycosylated.

The protein resides in the mitochondrion. This is an uncharacterized protein from Saccharomyces cerevisiae (strain ATCC 204508 / S288c) (Baker's yeast).